A 476-amino-acid polypeptide reads, in one-letter code: Stromelysin-2 (476 aa).

Residues 1-17 (MEPLAILVLLCFPICSA) form the signal peptide. Positions 18–99 (YPLHGAVRQD…PRCGVPDVGG (82 aa)) are cleaved as a propeptide — activation peptide. The Cysteine switch signature appears at 90–97 (PRCGVPDV). The Zn(2+) site is built by Cys-92, His-168, Asp-170, His-183, His-196, and His-218. Residue Glu-219 is part of the active site. Residues His-222 and His-228 each coordinate Zn(2+). 4 Hemopexin repeats span residues 286–335 (PVKC…WPSL), 336–382 (PSGL…GFPP), 384–432 (VKKI…FPGI), and 433–476 (EPQV…WLLC). A disulfide bridge connects residues Cys-289 and Cys-476.

It belongs to the peptidase M10A family. Zn(2+) serves as cofactor. Requires Ca(2+) as cofactor.

The protein resides in the secreted. The protein localises to the extracellular space. It is found in the extracellular matrix. The catalysed reaction is Similar to stromelysin 1, but action on collagen types III, IV and V is weak.. In terms of biological role, can degrade fibronectin, gelatins of type I, III, IV, and V; weakly collagens III, IV, and V. Activates procollagenase. This is Stromelysin-2 (Mmp10) from Rattus norvegicus (Rat).